Consider the following 125-residue polypeptide: Protein MGF 360-9L (125 aa).

Belongs to the asfivirus MGF 360 family. As to quaternary structure, interacts with host STAT1; this interaction mediates STAT1 degradation through apoptosis. Interacts with host STAT2; this interaction mediates STAT2 degradation through the proteasome.

The protein resides in the host cytoplasm. Functionally, plays a role in virus cell tropism, and may be required for efficient virus replication in macrophages. In addition, inhibits IFN-beta-induced IFN-stimulated genes (ISGs) transcription. Mechanistically, degrades host STAT1 and STAT2 through apoptosis and ubiquitin-proteasome pathways respectively. The protein is Protein MGF 360-9L of African swine fever virus (strain Badajoz 1971 Vero-adapted) (Ba71V).